The following is a 173-amino-acid chain: Large ribosomal subunit protein uL10 (173 aa).

This sequence belongs to the universal ribosomal protein uL10 family. As to quaternary structure, part of the ribosomal stalk of the 50S ribosomal subunit. The N-terminus interacts with L11 and the large rRNA to form the base of the stalk. The C-terminus forms an elongated spine to which L12 dimers bind in a sequential fashion forming a multimeric L10(L12)X complex.

Functionally, forms part of the ribosomal stalk, playing a central role in the interaction of the ribosome with GTP-bound translation factors. In Bifidobacterium longum (strain DJO10A), this protein is Large ribosomal subunit protein uL10.